Consider the following 274-residue polypeptide: N-acetylmuramic acid 6-phosphate etherase (274 aa).

Positions 54–217 (IIPRIDSGGR…STSVMIKLGR (164 aa)) constitute an SIS domain. Glu82 (proton donor) is an active-site residue. Glu113 is a catalytic residue.

Belongs to the GCKR-like family. MurNAc-6-P etherase subfamily. As to quaternary structure, homodimer.

The catalysed reaction is N-acetyl-D-muramate 6-phosphate + H2O = N-acetyl-D-glucosamine 6-phosphate + (R)-lactate. It functions in the pathway amino-sugar metabolism; N-acetylmuramate degradation. Functionally, specifically catalyzes the cleavage of the D-lactyl ether substituent of MurNAc 6-phosphate, producing GlcNAc 6-phosphate and D-lactate. The sequence is that of N-acetylmuramic acid 6-phosphate etherase from Christiangramia forsetii (strain DSM 17595 / CGMCC 1.15422 / KT0803) (Gramella forsetii).